Here is a 273-residue protein sequence, read N- to C-terminus: Ribosomal RNA small subunit methyltransferase A (273 aa).

Asn-19, Leu-21, Gly-46, Glu-71, Asp-94, and Asn-117 together coordinate S-adenosyl-L-methionine.

The protein belongs to the class I-like SAM-binding methyltransferase superfamily. rRNA adenine N(6)-methyltransferase family. RsmA subfamily.

The protein resides in the cytoplasm. It carries out the reaction adenosine(1518)/adenosine(1519) in 16S rRNA + 4 S-adenosyl-L-methionine = N(6)-dimethyladenosine(1518)/N(6)-dimethyladenosine(1519) in 16S rRNA + 4 S-adenosyl-L-homocysteine + 4 H(+). Specifically dimethylates two adjacent adenosines (A1518 and A1519) in the loop of a conserved hairpin near the 3'-end of 16S rRNA in the 30S particle. May play a critical role in biogenesis of 30S subunits. The sequence is that of Ribosomal RNA small subunit methyltransferase A from Burkholderia ambifaria (strain MC40-6).